A 299-amino-acid polypeptide reads, in one-letter code: tRNA dimethylallyltransferase (299 aa).

ATP is bound at residue 8 to 15; the sequence is GPTASGKT. 10–15 contacts substrate; the sequence is TASGKT. Positions 33–36 are interaction with substrate tRNA; it reads DSQQ.

Belongs to the IPP transferase family. Monomer. It depends on Mg(2+) as a cofactor.

The catalysed reaction is adenosine(37) in tRNA + dimethylallyl diphosphate = N(6)-dimethylallyladenosine(37) in tRNA + diphosphate. Its function is as follows. Catalyzes the transfer of a dimethylallyl group onto the adenine at position 37 in tRNAs that read codons beginning with uridine, leading to the formation of N6-(dimethylallyl)adenosine (i(6)A). The polypeptide is tRNA dimethylallyltransferase (Anaeromyxobacter dehalogenans (strain 2CP-C)).